The sequence spans 658 residues: tRNA 5-methylaminomethyl-2-thiouridine biosynthesis bifunctional protein MnmC (658 aa).

Residues 1-236 (MIPELPHAQL…KWEVLRGEFL (236 aa)) are tRNA (mnm(5)s(2)U34)-methyltransferase. The segment at 265-658 (IGGGLAGCAS…ALRRLIRGKA (394 aa)) is FAD-dependent cmnm(5)s(2)U34 oxidoreductase.

The protein in the N-terminal section; belongs to the methyltransferase superfamily. tRNA (mnm(5)s(2)U34)-methyltransferase family. In the C-terminal section; belongs to the DAO family. FAD serves as cofactor.

The protein localises to the cytoplasm. The enzyme catalyses 5-aminomethyl-2-thiouridine(34) in tRNA + S-adenosyl-L-methionine = 5-methylaminomethyl-2-thiouridine(34) in tRNA + S-adenosyl-L-homocysteine + H(+). Its function is as follows. Catalyzes the last two steps in the biosynthesis of 5-methylaminomethyl-2-thiouridine (mnm(5)s(2)U) at the wobble position (U34) in tRNA. Catalyzes the FAD-dependent demodification of cmnm(5)s(2)U34 to nm(5)s(2)U34, followed by the transfer of a methyl group from S-adenosyl-L-methionine to nm(5)s(2)U34, to form mnm(5)s(2)U34. The protein is tRNA 5-methylaminomethyl-2-thiouridine biosynthesis bifunctional protein MnmC of Pseudomonas fluorescens (strain ATCC BAA-477 / NRRL B-23932 / Pf-5).